A 168-amino-acid chain; its full sequence is Small ribosomal subunit protein uS5 (168 aa).

The S5 DRBM domain maps to 14-77; the sequence is FEERVVSINR…EAAKKNLITV (64 aa).

Belongs to the universal ribosomal protein uS5 family. Part of the 30S ribosomal subunit. Contacts proteins S4 and S8.

In terms of biological role, with S4 and S12 plays an important role in translational accuracy. Located at the back of the 30S subunit body where it stabilizes the conformation of the head with respect to the body. In Lactococcus lactis subsp. cremoris (strain MG1363), this protein is Small ribosomal subunit protein uS5.